We begin with the raw amino-acid sequence, 666 residues long: tRNA 5-methylaminomethyl-2-thiouridine biosynthesis bifunctional protein MnmC (666 aa).

Residues 1–245 (MKQYAIQPAT…KREMLCGVME (245 aa)) form a tRNA (mnm(5)s(2)U34)-methyltransferase region. Residues 270–666 (IGGGIASALL…RKLLKGKAVK (397 aa)) form an FAD-dependent cmnm(5)s(2)U34 oxidoreductase region.

The protein in the N-terminal section; belongs to the methyltransferase superfamily. tRNA (mnm(5)s(2)U34)-methyltransferase family. It in the C-terminal section; belongs to the DAO family. The cofactor is FAD.

The protein resides in the cytoplasm. It catalyses the reaction 5-aminomethyl-2-thiouridine(34) in tRNA + S-adenosyl-L-methionine = 5-methylaminomethyl-2-thiouridine(34) in tRNA + S-adenosyl-L-homocysteine + H(+). Its function is as follows. Catalyzes the last two steps in the biosynthesis of 5-methylaminomethyl-2-thiouridine (mnm(5)s(2)U) at the wobble position (U34) in tRNA. Catalyzes the FAD-dependent demodification of cmnm(5)s(2)U34 to nm(5)s(2)U34, followed by the transfer of a methyl group from S-adenosyl-L-methionine to nm(5)s(2)U34, to form mnm(5)s(2)U34. In Salmonella choleraesuis (strain SC-B67), this protein is tRNA 5-methylaminomethyl-2-thiouridine biosynthesis bifunctional protein MnmC.